Reading from the N-terminus, the 451-residue chain is D-aminoacyl-tRNA deacylase (451 aa).

The segment at 410–437 (RTADIPEGPKFGKLASGESVEIDGEEID) is disordered.

It belongs to the DtdA deacylase family. Monomer. Zn(2+) is required as a cofactor.

The catalysed reaction is a D-aminoacyl-tRNA + H2O = a tRNA + a D-alpha-amino acid + H(+). The enzyme catalyses glycyl-tRNA(Ala) + H2O = tRNA(Ala) + glycine + H(+). Its function is as follows. D-aminoacyl-tRNA deacylase with broad substrate specificity. By recycling D-aminoacyl-tRNA to D-amino acids and free tRNA molecules, this enzyme counteracts the toxicity associated with the formation of D-aminoacyl-tRNA entities in vivo. In Haloarcula marismortui (strain ATCC 43049 / DSM 3752 / JCM 8966 / VKM B-1809) (Halobacterium marismortui), this protein is D-aminoacyl-tRNA deacylase.